The sequence spans 208 residues: ATP phosphoribosyltransferase (208 aa).

The protein belongs to the ATP phosphoribosyltransferase family. Short subfamily. Heteromultimer composed of HisG and HisZ subunits.

The protein resides in the cytoplasm. The catalysed reaction is 1-(5-phospho-beta-D-ribosyl)-ATP + diphosphate = 5-phospho-alpha-D-ribose 1-diphosphate + ATP. The protein operates within amino-acid biosynthesis; L-histidine biosynthesis; L-histidine from 5-phospho-alpha-D-ribose 1-diphosphate: step 1/9. Catalyzes the condensation of ATP and 5-phosphoribose 1-diphosphate to form N'-(5'-phosphoribosyl)-ATP (PR-ATP). Has a crucial role in the pathway because the rate of histidine biosynthesis seems to be controlled primarily by regulation of HisG enzymatic activity. The chain is ATP phosphoribosyltransferase from Hydrogenovibrio crunogenus (strain DSM 25203 / XCL-2) (Thiomicrospira crunogena).